Consider the following 73-residue polypeptide: DNA-directed RNA polymerase subunit Rpo10 (73 aa).

Residues C7, C10, C44, and C45 each coordinate Zn(2+).

Belongs to the archaeal Rpo10/eukaryotic RPB10 RNA polymerase subunit family. In terms of assembly, part of the RNA polymerase complex. Forms an Rpo3-Rpo10-Rpo11-Rpo12 complex upon coexpression. Zn(2+) is required as a cofactor.

The protein resides in the cytoplasm. The catalysed reaction is RNA(n) + a ribonucleoside 5'-triphosphate = RNA(n+1) + diphosphate. Functionally, DNA-dependent RNA polymerase (RNAP) catalyzes the transcription of DNA into RNA using the four ribonucleoside triphosphates as substrates. In Methanocaldococcus jannaschii (strain ATCC 43067 / DSM 2661 / JAL-1 / JCM 10045 / NBRC 100440) (Methanococcus jannaschii), this protein is DNA-directed RNA polymerase subunit Rpo10.